Reading from the N-terminus, the 348-residue chain is Dihydroorotase (348 aa).

Residues His17 and His19 each contribute to the Zn(2+) site. Substrate is bound by residues His19–Arg21 and Asn45. Zn(2+) is bound by residues Lys103, His140, and His178. Lys103 is subject to N6-carboxylysine. His140 provides a ligand contact to substrate. Leu223 contributes to the substrate binding site. Asp251 is a binding site for Zn(2+). The active site involves Asp251. Positions 255 and 267 each coordinate substrate.

It belongs to the metallo-dependent hydrolases superfamily. DHOase family. Class II DHOase subfamily. Homodimer. Zn(2+) is required as a cofactor.

The catalysed reaction is (S)-dihydroorotate + H2O = N-carbamoyl-L-aspartate + H(+). It participates in pyrimidine metabolism; UMP biosynthesis via de novo pathway; (S)-dihydroorotate from bicarbonate: step 3/3. Functionally, catalyzes the reversible cyclization of carbamoyl aspartate to dihydroorotate. This chain is Dihydroorotase, found in Enterobacter sp. (strain 638).